Reading from the N-terminus, the 338-residue chain is Glycerol-3-phosphate dehydrogenase [NAD(P)+] (338 aa).

NADPH is bound by residues S13, W14, and K108. Sn-glycerol 3-phosphate is bound by residues K108, G139, and S141. NADPH is bound at residue A143. The sn-glycerol 3-phosphate site is built by K194, D247, S257, R258, and N259. K194 (proton acceptor) is an active-site residue. R258 provides a ligand contact to NADPH. Residues V282 and E284 each coordinate NADPH.

It belongs to the NAD-dependent glycerol-3-phosphate dehydrogenase family.

Its subcellular location is the cytoplasm. The enzyme catalyses sn-glycerol 3-phosphate + NAD(+) = dihydroxyacetone phosphate + NADH + H(+). It carries out the reaction sn-glycerol 3-phosphate + NADP(+) = dihydroxyacetone phosphate + NADPH + H(+). It functions in the pathway membrane lipid metabolism; glycerophospholipid metabolism. Its function is as follows. Catalyzes the reduction of the glycolytic intermediate dihydroxyacetone phosphate (DHAP) to sn-glycerol 3-phosphate (G3P), the key precursor for phospholipid synthesis. In Streptococcus suis (strain 98HAH33), this protein is Glycerol-3-phosphate dehydrogenase [NAD(P)+].